The primary structure comprises 152 residues: Transcriptional regulator MraZ (152 aa).

2 consecutive SpoVT-AbrB domains span residues 5–52 and 81–124; these read ATLV…TLPE and ASEC…DETT.

Belongs to the MraZ family. Forms oligomers.

The protein localises to the cytoplasm. Its subcellular location is the nucleoid. Its function is as follows. Negatively regulates its own expression and that of the subsequent genes in the proximal part of the division and cell wall (dcw) gene cluster. Acts by binding directly to DNA. May also regulate the expression of genes outside the dcw cluster. In Enterobacter sp. (strain 638), this protein is Transcriptional regulator MraZ.